The following is a 268-amino-acid chain: MFLVNSFLKGGGGGGGGGGLGGGLGNVLGGLISGAAGGGGGGGGGMGLGGGGGGGGTAMRILGGVISAISEAAAQYNPEPPPPRSHYSNIEANESEEVRQFRKLFVQLAGDDMEVSATELMNILNKVVTRHPDLKTDGFGIDTCRSMVAVMDSDTTGKLGFEEFKYLWNNIKKWQAIYKRFDTDRSGTIGSHELPGAFEAAGFHLNEHLYSMIIRRYADESGNMDFDNFISCLVRLDAMFRAFKSLDKNGTGQIQVNIQEWLQLTMYS.

Met-1 is modified (N-acetylmethionine). A Phosphoserine modification is found at Ser-6. Positions 96–130 (EEVRQFRKLFVQLAGDDMEVSATELMNILNKVVTR) constitute an EF-hand 1; atypical domain. 10 residues coordinate Ca(2+): Ala-109, Asp-112, Glu-114, Glu-119, Asp-137, Asp-152, Asp-154, Thr-156, Lys-158, and Glu-163. EF-hand domains follow at residues 139–172 (FGID…NNIK), 169–204 (NNIK…AGFH), 205–233 (LNEH…ISCL), and 234–268 (VRLD…TMYS). N6-acetyllysine is present on Lys-179. Ca(2+) contacts are provided by Asp-182, Asp-184, Ser-186, Thr-188, Glu-193, and Asp-225.

Homodimer or heterodimer of a large (catalytic) and a small (regulatory) subunit. In presence of calcium, the heterodimer dissociates.

It localises to the cytoplasm. Its subcellular location is the cell membrane. Functionally, regulatory subunit of the calcium-regulated non-lysosomal thiol-protease which catalyzes limited proteolysis of substrates involved in cytoskeletal remodeling and signal transduction. Essential for embryonic development. This Mus musculus (Mouse) protein is Calpain small subunit 1 (Capns1).